Here is a 56-residue protein sequence, read N- to C-terminus: Endoregulin (56 aa).

Residues 25–45 (LTVIGLFTSTFLLFVLFAVVF) traverse the membrane as a helical segment.

In terms of assembly, homooligomer. Can also form heterooligomers with other sarcoplasmic/endoplasmic reticulum calcium ATPase (SERCA) regulators ARLN, PLN, SLN and STRIT1/DWORF. Monomer. Interacts as a monomer with ATP2A2/SERCA2; the interaction results in inhibition of ATP2A2 Ca(2+) affinity. As to expression, largely expressed in non-muscle tissues with the exception of weak expression in body wall muscles at 14.5 dpc. Expressed in epithelial cells of the trachea, bronchus, lung, intestine, pancreas, and liver.

The protein localises to the endoplasmic reticulum membrane. Its function is as follows. Inhibits the activity of the calcium ATPases ATP2A2/SERCA2 and ATP2A3/SERCA3 by decreasing their apparent affinity for Ca(2+). The protein is Endoregulin (Erln) of Mus musculus (Mouse).